The primary structure comprises 65 residues: Large ribosomal subunit protein bL35 (65 aa).

Positions 1 to 22 (MPKIKTVRGAAKRFKKTGSGGF) are disordered. A compositionally biased stretch (basic residues) spans 10–22 (AAKRFKKTGSGGF).

This sequence belongs to the bacterial ribosomal protein bL35 family.

The protein is Large ribosomal subunit protein bL35 of Serratia proteamaculans (strain 568).